Consider the following 283-residue polypeptide: Tetrahydroxynaphthalene reductase (283 aa).

A disordered region spans residues 1-21; the sequence is MPAVTQPRGESKYDAIPGPLG. 39–63 serves as a coordination point for NADP(+); that stretch reads RGIGREMAMELGRRGCKVIVNYANS. Residue Ser-164 participates in substrate binding. The Proton acceptor role is filled by Tyr-178.

This sequence belongs to the short-chain dehydrogenases/reductases (SDR) family. Homotetramer.

The enzyme catalyses scytalone + NADP(+) = naphthalene-1,3,6,8-tetrol + NADPH + H(+). The protein operates within pigment biosynthesis; melanin biosynthesis. Functionally, catalyzes the NADPH-dependent reduction of 1,3,6,8-tetrahydroxynaphthalene (T4HN) into (+)-scytalone and 1,3,8-trihydroxynaphthalene into (-)-vermelone. This enzyme is the biochemical target of several commercially important fungicides which are used to prevent blast disease in rice plants. In Pyricularia oryzae (strain 70-15 / ATCC MYA-4617 / FGSC 8958) (Rice blast fungus), this protein is Tetrahydroxynaphthalene reductase.